Reading from the N-terminus, the 520-residue chain is UvrABC system protein C (520 aa).

Positions 11–89 constitute a GIY-YIG domain; it reads EEPGCYQFKD…IKKYQPKYNI (79 aa). Residues 195–230 enclose the UVR domain; the sequence is QDLIYDLRKEMETFAAAEEYEKALVIRDRIAAIENL.

This sequence belongs to the UvrC family. As to quaternary structure, interacts with UvrB in an incision complex.

The protein resides in the cytoplasm. Its function is as follows. The UvrABC repair system catalyzes the recognition and processing of DNA lesions. UvrC both incises the 5' and 3' sides of the lesion. The N-terminal half is responsible for the 3' incision and the C-terminal half is responsible for the 5' incision. This is UvrABC system protein C from Methanospirillum hungatei JF-1 (strain ATCC 27890 / DSM 864 / NBRC 100397 / JF-1).